The sequence spans 238 residues: ATP-dependent dethiobiotin synthetase BioD (238 aa).

12-17 contributes to the ATP binding site; sequence EVGKTV. Position 16 (Thr16) interacts with Mg(2+). Lys37 is an active-site residue. Substrate is bound at residue Thr41. ATP contacts are provided by residues Asp50, 109 to 112, 170 to 171, and 200 to 202; these read EGAG, GS, and PAG. Residues Asp50 and Glu109 each coordinate Mg(2+).

The protein belongs to the dethiobiotin synthetase family. In terms of assembly, homodimer. The cofactor is Mg(2+).

The protein resides in the cytoplasm. It catalyses the reaction (7R,8S)-7,8-diammoniononanoate + CO2 + ATP = (4R,5S)-dethiobiotin + ADP + phosphate + 3 H(+). It participates in cofactor biosynthesis; biotin biosynthesis; biotin from 7,8-diaminononanoate: step 1/2. In terms of biological role, catalyzes a mechanistically unusual reaction, the ATP-dependent insertion of CO2 between the N7 and N8 nitrogen atoms of 7,8-diaminopelargonic acid (DAPA, also called 7,8-diammoniononanoate) to form a ureido ring. This Streptomyces coelicolor (strain ATCC BAA-471 / A3(2) / M145) protein is ATP-dependent dethiobiotin synthetase BioD.